Reading from the N-terminus, the 505-residue chain is Lysine--tRNA ligase 1 (505 aa).

Mg(2+) contacts are provided by Asp-415 and Glu-422.

The protein belongs to the class-II aminoacyl-tRNA synthetase family. As to quaternary structure, homodimer. Requires Mg(2+) as cofactor.

It is found in the cytoplasm. It carries out the reaction tRNA(Lys) + L-lysine + ATP = L-lysyl-tRNA(Lys) + AMP + diphosphate. This Mycobacterium bovis (strain ATCC BAA-935 / AF2122/97) protein is Lysine--tRNA ligase 1 (lysS1).